Here is a 399-residue protein sequence, read N- to C-terminus: Acetylornithine aminotransferase (399 aa).

Residues 102–103 (GA) and phenylalanine 138 contribute to the pyridoxal 5'-phosphate site. Arginine 141 serves as a coordination point for N(2)-acetyl-L-ornithine. 223-226 (DEVQ) lines the pyridoxal 5'-phosphate pocket. An N6-(pyridoxal phosphate)lysine modification is found at lysine 252. Pyridoxal 5'-phosphate is bound at residue threonine 280.

The protein belongs to the class-III pyridoxal-phosphate-dependent aminotransferase family. ArgD subfamily. In terms of assembly, homodimer. The cofactor is pyridoxal 5'-phosphate.

The protein resides in the cytoplasm. The enzyme catalyses N(2)-acetyl-L-ornithine + 2-oxoglutarate = N-acetyl-L-glutamate 5-semialdehyde + L-glutamate. It functions in the pathway amino-acid biosynthesis; L-arginine biosynthesis; N(2)-acetyl-L-ornithine from L-glutamate: step 4/4. This chain is Acetylornithine aminotransferase, found in Ralstonia nicotianae (strain ATCC BAA-1114 / GMI1000) (Ralstonia solanacearum).